A 216-amino-acid chain; its full sequence is Adenylate kinase (216 aa).

10 to 15 (GAGKGT) contacts ATP. The NMP stretch occupies residues 30-59 (STGDMFRAAMKAETEMGLQAKSFIDKGALV). AMP-binding positions include Thr31, Arg36, 57 to 59 (ALV), 85 to 88 (GFPR), and Gln92. The segment at 126 to 163 (GRRICKECGATYHLEFNAPAKADVCDKCGGELYQRSDD) is LID. Position 127 (Arg127) interacts with ATP. Zn(2+) contacts are provided by Cys130 and Cys133. Residue 136 to 137 (TY) coordinates ATP. Residues Cys150 and Cys153 each contribute to the Zn(2+) site. 2 residues coordinate AMP: Arg160 and Arg171. Gln199 serves as a coordination point for ATP.

This sequence belongs to the adenylate kinase family. In terms of assembly, monomer.

Its subcellular location is the cytoplasm. It catalyses the reaction AMP + ATP = 2 ADP. It participates in purine metabolism; AMP biosynthesis via salvage pathway; AMP from ADP: step 1/1. Catalyzes the reversible transfer of the terminal phosphate group between ATP and AMP. Plays an important role in cellular energy homeostasis and in adenine nucleotide metabolism. The protein is Adenylate kinase of Bacillus anthracis (strain A0248).